We begin with the raw amino-acid sequence, 386 residues long: DNA replication and repair protein RecF (386 aa).

ATP is bound at residue 30-37 (GANAQGKT).

This sequence belongs to the RecF family.

The protein resides in the cytoplasm. The RecF protein is involved in DNA metabolism; it is required for DNA replication and normal SOS inducibility. RecF binds preferentially to single-stranded, linear DNA. It also seems to bind ATP. The protein is DNA replication and repair protein RecF of Natranaerobius thermophilus (strain ATCC BAA-1301 / DSM 18059 / JW/NM-WN-LF).